A 119-amino-acid chain; its full sequence is Ribosome-binding factor A (119 aa).

Belongs to the RbfA family. In terms of assembly, monomer. Binds 30S ribosomal subunits, but not 50S ribosomal subunits or 70S ribosomes.

Its subcellular location is the cytoplasm. In terms of biological role, one of several proteins that assist in the late maturation steps of the functional core of the 30S ribosomal subunit. Associates with free 30S ribosomal subunits (but not with 30S subunits that are part of 70S ribosomes or polysomes). Required for efficient processing of 16S rRNA. May interact with the 5'-terminal helix region of 16S rRNA. This chain is Ribosome-binding factor A, found in Pelodictyon phaeoclathratiforme (strain DSM 5477 / BU-1).